A 249-amino-acid polypeptide reads, in one-letter code: Thioesterase TesA (249 aa).

Active-site residues include S92, D196, and H224.

Belongs to the thioesterase family.

It carries out the reaction a fatty acyl-CoA + H2O = a fatty acid + CoA + H(+). Involved in the synthesis of both phthiocerol dimycocerosates (PDIMs) and phenolic glycolipids (PGLs), which are structurally related lipids non-covalently bound to the outer cell wall layer of M.tuberculosis and are important virulence factors. The sequence is that of Thioesterase TesA from Mycobacterium marinum (strain ATCC BAA-535 / M).